Here is a 664-residue protein sequence, read N- to C-terminus: L-type lectin-domain containing receptor kinase I.3 (664 aa).

Positions 1 to 21 (MACRLYLALIFSCVYLICLSS) are cleaved as a signal peptide. The Extracellular segment spans residues 22 to 286 (QQETGFVYNG…PKEEKKKLSP (265 aa)). Residues 24 to 257 (ETGFVYNGFE…NHYILGWSFS (234 aa)) are legume-lectin like. Residues N55, N125, N128, N181, N204, N225, and N267 are each glycosylated (N-linked (GlcNAc...) asparagine). The helical transmembrane segment at 287–307 (LLIGLVILLVIPVVMVLGGVY) threads the bilayer. Residues 308 to 664 (WYRRKKYAEV…THTILDGHGR (357 aa)) are Cytoplasmic-facing. The region spanning 342–619 (FRKDCRVGKG…LNQDLPLPIF (278 aa)) is the Protein kinase domain. Residues 348 to 356 (VGKGGFGEV) and K370 contribute to the ATP site. The active-site Proton acceptor is D466.

The protein in the C-terminal section; belongs to the protein kinase superfamily. Ser/Thr protein kinase family. In the N-terminal section; belongs to the leguminous lectin family. Post-translationally, autophosphorylated on Ser and Thr residues. Mostly expressed in roots and flowers, and, to a lower extent, in leaves.

The protein resides in the cell membrane. It carries out the reaction L-seryl-[protein] + ATP = O-phospho-L-seryl-[protein] + ADP + H(+). The enzyme catalyses L-threonyl-[protein] + ATP = O-phospho-L-threonyl-[protein] + ADP + H(+). Involved in resistance response to the pathogenic fungus Alternaria brassicicola. The polypeptide is L-type lectin-domain containing receptor kinase I.3 (Arabidopsis thaliana (Mouse-ear cress)).